The following is a 340-amino-acid chain: Adenosine kinase (340 aa).

The active site involves Asp293.

It belongs to the carbohydrate kinase PfkB family. As to quaternary structure, monomer. Mg(2+) is required as a cofactor.

The catalysed reaction is adenosine + ATP = AMP + ADP + H(+). It participates in purine metabolism; AMP biosynthesis via salvage pathway; AMP from adenosine: step 1/1. Functionally, ATP dependent phosphorylation of adenosine and other related nucleoside analogs to monophosphate derivatives. The polypeptide is Adenosine kinase (adk) (Dictyostelium discoideum (Social amoeba)).